Here is a 234-residue protein sequence, read N- to C-terminus: Large ribosomal subunit protein uL1 (234 aa).

This sequence belongs to the universal ribosomal protein uL1 family. In terms of assembly, part of the 50S ribosomal subunit.

Functionally, binds directly to 23S rRNA. The L1 stalk is quite mobile in the ribosome, and is involved in E site tRNA release. Its function is as follows. Protein L1 is also a translational repressor protein, it controls the translation of the L11 operon by binding to its mRNA. The polypeptide is Large ribosomal subunit protein uL1 (Baumannia cicadellinicola subsp. Homalodisca coagulata).